The chain runs to 269 residues: Eukaryotic translation initiation factor 3 subunit G (269 aa).

The disordered stretch occupies residues 140-181 (AIGGGDMSAQGGSGSGRYVPPSLRAGARDPSSNAYQDQRERD). Residues 141–154 (IGGGDMSAQGGSGS) show a composition bias toward gly residues. Ser161 is modified (phosphoserine). Residues 184 to 263 (KTIRLTQVNE…FMLHAEWSKP (80 aa)) enclose the RRM domain.

It belongs to the eIF-3 subunit G family. As to quaternary structure, component of the eukaryotic translation initiation factor 3 (eIF-3) complex.

It localises to the cytoplasm. RNA-binding component of the eukaryotic translation initiation factor 3 (eIF-3) complex, which is involved in protein synthesis of a specialized repertoire of mRNAs and, together with other initiation factors, stimulates binding of mRNA and methionyl-tRNAi to the 40S ribosome. The eIF-3 complex specifically targets and initiates translation of a subset of mRNAs involved in cell proliferation. This subunit can bind 18S rRNA. This chain is Eukaryotic translation initiation factor 3 subunit G, found in Kluyveromyces lactis (strain ATCC 8585 / CBS 2359 / DSM 70799 / NBRC 1267 / NRRL Y-1140 / WM37) (Yeast).